The following is a 147-amino-acid chain: Hemoglobin subunit epsilon (147 aa).

The Globin domain occupies 3–147; it reads HFTAEEKAAI…VAIALGHKYH (145 aa). Ser14 and Ser51 each carry phosphoserine. Residues His64 and His93 each coordinate heme b.

The protein belongs to the globin family. As to quaternary structure, heterotetramer of two alpha chains and two epsilon chains in early embryonic hemoglobin Gower-2; two zeta chains and two epsilon chains in early embryonic hemoglobin Gower-1. Red blood cells.

In terms of biological role, the epsilon chain is a beta-type chain of early mammalian embryonic hemoglobin. This chain is Hemoglobin subunit epsilon (HBE1), found in Alouatta belzebul (Red-handed howler monkey).